The sequence spans 419 residues: Keratin, type I cytoskeletal 47 kDa (419 aa).

Residues 1 to 81 (MSFRSSSSYS…SSSFSNFGGN (81 aa)) form a head region. A coil 1A region spans residues 82–117 (DKQTMQNLNDRLASYLEKVRALEAANADLELKIREW). In terms of domain architecture, IF rod spans 82-397 (DKQTMQNLND…RLLEGEFGSL (316 aa)). The linker 1 stretch occupies residues 118 to 139 (YEKQKGSGIGAGSKDFSKYFEI). The coil 1B stretch occupies residues 140–231 (ISDLRNKILS…KNHEEEMSIA (92 aa)). The linker 12 stretch occupies residues 232–254 (KSSSAGQVNVEMDAAPGIDLNKI). A coil 2 region spans residues 255-393 (LSDMRADYET…ETYRRLLEGE (139 aa)). A tail region spans residues 394-419 (FGSLKSSIVQATEVSTSQSSSSSKKD).

It belongs to the intermediate filament family. In terms of assembly, heterotetramer of two type I and two type II keratins.

In Xenopus laevis (African clawed frog), this protein is Keratin, type I cytoskeletal 47 kDa (xk81b2).